The primary structure comprises 205 residues: Methylthioribulose-1-phosphate dehydratase (205 aa).

Histidine 96 and histidine 98 together coordinate Zn(2+).

This sequence belongs to the aldolase class II family. MtnB subfamily. Requires Zn(2+) as cofactor.

The catalysed reaction is 5-(methylsulfanyl)-D-ribulose 1-phosphate = 5-methylsulfanyl-2,3-dioxopentyl phosphate + H2O. Its pathway is amino-acid biosynthesis; L-methionine biosynthesis via salvage pathway; L-methionine from S-methyl-5-thio-alpha-D-ribose 1-phosphate: step 2/6. In terms of biological role, catalyzes the dehydration of methylthioribulose-1-phosphate (MTRu-1-P) into 2,3-diketo-5-methylthiopentyl-1-phosphate (DK-MTP-1-P). In Pseudomonas aeruginosa (strain ATCC 15692 / DSM 22644 / CIP 104116 / JCM 14847 / LMG 12228 / 1C / PRS 101 / PAO1), this protein is Methylthioribulose-1-phosphate dehydratase.